We begin with the raw amino-acid sequence, 425 residues long: Probable mannosyltransferase KTR2 (425 aa).

The Cytoplasmic segment spans residues 1–13 (MQICKVFLTQVKK). Residues 14 to 33 (LLFVSLLFCLIAQTCWLALV) form a helical; Signal-anchor for type II membrane protein membrane-spanning segment. The segment at 34 to 89 (PYQRQLSLDSYFFRRSREVSSRYDFTRRRHMNQTLKLSSNTYNDEPLNKTKGIKNQ) is stem region. Residues 34 to 425 (PYQRQLSLDS…SGKYFLKHDS (392 aa)) lie on the Lumenal side of the membrane. Residues Asn65, Asn81, Asn92, and Asn167 are each glycosylated (N-linked (GlcNAc...) asparagine). Positions 90 to 425 (RENATLLMLV…SGKYFLKHDS (336 aa)) are catalytic. Glu313 functions as the Nucleophile in the catalytic mechanism.

The protein belongs to the glycosyltransferase 15 family.

It is found in the golgi apparatus membrane. Its pathway is protein modification; protein glycosylation. In terms of biological role, involved in N-linked glycosylation. Transfers an alpha-D-mannosyl residue from GDP-mannose into lipid-linked oligosaccharide, forming an alpha-(1-&gt;2)-D-mannosyl-D-mannose linkage. In Saccharomyces cerevisiae (strain ATCC 204508 / S288c) (Baker's yeast), this protein is Probable mannosyltransferase KTR2 (KTR2).